The chain runs to 415 residues: MIDRKLLLQDFDKVALSLKKRNHAMGDELERLREVITHYKKQLIELEGLQAFQNKVSKEFGIKMAQKVDTSDLKKELENNKIKLNELSKSVGELEQQIDLKLSIIPNLVDEKTPLGASEEDNIEIKKILTPRVFTFKPKEHFELAQQNGWIDFESGVKLAKSRFSVIRGFGAKIYRALIHLMLDFNEKNGFEIIYTPALVNEKMLFGTGQLPKFKEDVFKIENENLYLIPTAEVTLTNLYNDTIIGVENLPIKMTAHTPCFRSEAGSAGKDTRGMIRQHQFDKVELVAITHSKESDAMQEHMLESASEILKALELPHRFVQLCSADLGFSASNTIDIEVWLPGQNCYREISSVSNTRDFQARRAKIRFKENQKNQLAHTLNGSSLAVGRTMVALMENHQQEDGSIHIPKALEKYL.

231-233 (TAE) is an L-serine binding site. 262–264 (RSE) contributes to the ATP binding site. Glu285 contacts L-serine. Residue 349–352 (EISS) participates in ATP binding. Position 383 (Ser383) interacts with L-serine.

This sequence belongs to the class-II aminoacyl-tRNA synthetase family. Type-1 seryl-tRNA synthetase subfamily. Homodimer. The tRNA molecule binds across the dimer.

It localises to the cytoplasm. The catalysed reaction is tRNA(Ser) + L-serine + ATP = L-seryl-tRNA(Ser) + AMP + diphosphate + H(+). It catalyses the reaction tRNA(Sec) + L-serine + ATP = L-seryl-tRNA(Sec) + AMP + diphosphate + H(+). It functions in the pathway aminoacyl-tRNA biosynthesis; selenocysteinyl-tRNA(Sec) biosynthesis; L-seryl-tRNA(Sec) from L-serine and tRNA(Sec): step 1/1. Its function is as follows. Catalyzes the attachment of serine to tRNA(Ser). Is also able to aminoacylate tRNA(Sec) with serine, to form the misacylated tRNA L-seryl-tRNA(Sec), which will be further converted into selenocysteinyl-tRNA(Sec). In Helicobacter pylori (strain HPAG1), this protein is Serine--tRNA ligase.